A 586-amino-acid polypeptide reads, in one-letter code: Alpha-1,2-mannosyltransferase MNN5 (586 aa).

The N-terminal stretch at 1–29 is a signal peptide; sequence MLIRLKKRKILQVIVSAVVLILFFCSVHN. Asn113, Asn136, Asn259, and Asn264 each carry an N-linked (GlcNAc...) asparagine glycan.

Belongs to the MNN1/MNT family. Interacts with SVP26. Post-translationally, glycosylated.

It is found in the golgi apparatus. The protein resides in the cis-Golgi network. Its pathway is protein modification; protein glycosylation. Its function is as follows. Responsible for addition of first and second mannose residues to the outer chain of core N-linked polysaccharides and to O-linked mannotriose. Implicated in late Golgi modifications. This Saccharomyces cerevisiae (strain ATCC 204508 / S288c) (Baker's yeast) protein is Alpha-1,2-mannosyltransferase MNN5 (MNN5).